The chain runs to 338 residues: D-erythrose-4-phosphate dehydrogenase (338 aa).

Arg12–Ile13 provides a ligand contact to NAD(+). Residues Ser154 to Thr156, Arg200, Thr213 to Lys214, and Arg236 contribute to the substrate site. Cys155 serves as the catalytic Nucleophile. An NAD(+)-binding site is contributed by Asn318.

The protein belongs to the glyceraldehyde-3-phosphate dehydrogenase family. Epd subfamily. As to quaternary structure, homotetramer.

The protein resides in the cytoplasm. The enzyme catalyses D-erythrose 4-phosphate + NAD(+) + H2O = 4-phospho-D-erythronate + NADH + 2 H(+). It functions in the pathway cofactor biosynthesis; pyridoxine 5'-phosphate biosynthesis; pyridoxine 5'-phosphate from D-erythrose 4-phosphate: step 1/5. Catalyzes the NAD-dependent conversion of D-erythrose 4-phosphate to 4-phosphoerythronate. The polypeptide is D-erythrose-4-phosphate dehydrogenase (Tolumonas auensis (strain DSM 9187 / NBRC 110442 / TA 4)).